A 177-amino-acid chain; its full sequence is Translation initiation factor IF-3 (177 aa).

Belongs to the IF-3 family. In terms of assembly, monomer.

The protein localises to the cytoplasm. IF-3 binds to the 30S ribosomal subunit and shifts the equilibrium between 70S ribosomes and their 50S and 30S subunits in favor of the free subunits, thus enhancing the availability of 30S subunits on which protein synthesis initiation begins. In Synechocystis sp. (strain ATCC 27184 / PCC 6803 / Kazusa), this protein is Translation initiation factor IF-3.